Reading from the N-terminus, the 55-residue chain is uncharacterized protein (55 aa).

A helical membrane pass occupies residues 27-47; the sequence is IFLIYHFSPIYCPYLFLFTVF.

It localises to the membrane. This is an uncharacterized protein from Acheta domesticus (House cricket).